The primary structure comprises 535 residues: Probable inorganic phosphate transporter 1-7 (535 aa).

Topologically, residues 1-24 (MAGDQLNVLNALDVAKTQWYHFTA) are cytoplasmic. A helical membrane pass occupies residues 25–45 (IIIAGMGFFTDAYDLFCISLV). The Extracellular segment spans residues 46–70 (TKLLGRIYYHVDGSEKPGTLPPNVS). The chain crosses the membrane as a helical span at residues 71 to 91 (AAVNGVAFCGTLAGQLFFGWL). The Cytoplasmic portion of the chain corresponds to 92–99 (GDKLGRKK). Residues 100-120 (VYGMTLMVMVLCSIASGLSFG) form a helical membrane-spanning segment. Residues 121–131 (SNPKTVMTTLC) lie on the Extracellular side of the membrane. The helical transmembrane segment at 132–152 (FFRFWLGFGIGGDYPLSATIM) threads the bilayer. At 153-161 (SEYANKKTR) the chain is on the cytoplasmic side. Residues 162-182 (GAFIAAVFAMQGFGILTGGIF) form a helical membrane-spanning segment. Residues 183–211 (AIIVSAAFEAKFPAPTYQIDALASTVPQA) are Extracellular-facing. The helical transmembrane segment at 212–232 (DYVWRIILMVGALPAAMTYYS) threads the bilayer. At 233–289 (RSKMPETARYTALVAKDAKLAASNMSKVLQVEIEAEQQGTEDKSNSFGLFSKEFMKR) the chain is on the cytoplasmic side. Residues 290 to 310 (HGLHLLGTTSTWFLLDIAFYS) form a helical membrane-spanning segment. Over 311 to 345 (QNLFQKDIFSAIGWIPPAQTMNAIQEVFKIARAQT) the chain is Extracellular. A helical membrane pass occupies residues 346 to 366 (LIALCSTVPGYWFTVAFIDVI). Residues 367-368 (GR) are Cytoplasmic-facing. Residues 369 to 389 (FAIQMMGFFFMTVFMFALAIP) traverse the membrane as a helical segment. Residues 390-399 (YDHWTHKENR) are Extracellular-facing. The chain crosses the membrane as a helical span at residues 400–420 (IGFVAMYSLTFFFANFGPNAT). The Cytoplasmic portion of the chain corresponds to 421 to 438 (TFVVPAEIFPARFRSTCH). A helical transmembrane segment spans residues 439–459 (GISAASGKLGAMVGAFGFLYL). Topologically, residues 460–480 (AQSPDKTKTEHGYPPGIGVKN) are extracellular. The chain crosses the membrane as a helical span at residues 481–501 (SLIVLGVVNLLGMVFTLLVPE). Residues 502–535 (SKGKSLEEMSGENEQNDESSSSSNNNSNNAVSTA) are Cytoplasmic-facing. The tract at residues 506–535 (SLEEMSGENEQNDESSSSSNNNSNNAVSTA) is disordered. A compositionally biased stretch (low complexity) spans 519–535 (ESSSSSNNNSNNAVSTA). Ser520 bears the Phosphoserine mark.

Belongs to the major facilitator superfamily. Phosphate:H(+) symporter (TC 2.A.1.9) family. As to expression, mature pollen.

It localises to the membrane. Its function is as follows. High-affinity transporter for external inorganic phosphate. This is Probable inorganic phosphate transporter 1-7 (PHT1-7) from Arabidopsis thaliana (Mouse-ear cress).